Reading from the N-terminus, the 252-residue chain is Geranylgeranylglyceryl phosphate synthase (252 aa).

2 residues coordinate Mg(2+): aspartate 26 and serine 55. Sn-glycerol 1-phosphate-binding positions include 174 to 180 (YLEAGSG), 205 to 206 (GG), and 227 to 228 (GT).

This sequence belongs to the GGGP/HepGP synthase family. Group II subfamily. Mg(2+) serves as cofactor.

It is found in the cytoplasm. The catalysed reaction is sn-glycerol 1-phosphate + (2E,6E,10E)-geranylgeranyl diphosphate = sn-3-O-(geranylgeranyl)glycerol 1-phosphate + diphosphate. It participates in membrane lipid metabolism; glycerophospholipid metabolism. In terms of biological role, prenyltransferase that catalyzes the transfer of the geranylgeranyl moiety of geranylgeranyl diphosphate (GGPP) to the C3 hydroxyl of sn-glycerol-1-phosphate (G1P). This reaction is the first ether-bond-formation step in the biosynthesis of archaeal membrane lipids. The protein is Geranylgeranylglyceryl phosphate synthase of Thermococcus gammatolerans (strain DSM 15229 / JCM 11827 / EJ3).